The following is a 408-amino-acid chain: S-adenosylmethionine synthase (408 aa).

Residue histidine 19 coordinates ATP. A Mg(2+)-binding site is contributed by aspartate 21. Glutamate 47 serves as a coordination point for K(+). 2 residues coordinate L-methionine: glutamate 60 and glutamine 104. The interval 104 to 114 (QSPEIASGVDH) is flexible loop. Residues 185–187 (DAK), 255–256 (RF), aspartate 264, 270–271 (RK), alanine 287, and lysine 291 contribute to the ATP site. Residue aspartate 264 participates in L-methionine binding. Lysine 295 serves as a coordination point for L-methionine.

Belongs to the AdoMet synthase family. Homotetramer; dimer of dimers. The cofactor is Mg(2+). It depends on K(+) as a cofactor.

It localises to the cytoplasm. It catalyses the reaction L-methionine + ATP + H2O = S-adenosyl-L-methionine + phosphate + diphosphate. The protein operates within amino-acid biosynthesis; S-adenosyl-L-methionine biosynthesis; S-adenosyl-L-methionine from L-methionine: step 1/1. In terms of biological role, catalyzes the formation of S-adenosylmethionine (AdoMet) from methionine and ATP. The overall synthetic reaction is composed of two sequential steps, AdoMet formation and the subsequent tripolyphosphate hydrolysis which occurs prior to release of AdoMet from the enzyme. This Deinococcus radiodurans (strain ATCC 13939 / DSM 20539 / JCM 16871 / CCUG 27074 / LMG 4051 / NBRC 15346 / NCIMB 9279 / VKM B-1422 / R1) protein is S-adenosylmethionine synthase.